Here is a 468-residue protein sequence, read N- to C-terminus: MRLPREIGPIHFVGIGGIGMSGIAEVLCNLGYTVQGSDASESANVSRLREKGIQIHVGHKADNVAGADVLVVSTAIKRDNPELLAARAQRIPVVRRAEMLAELMRLKSCVAIAGTHGKTTTTSMVAALLDAGDFDPTVINGGIINAYGTNARLGAGDWMVVEADESDGTFLKLPADVAIVTNVDPEHLDHFKTFDAVQDAFRNFVENVPFYGFAVMCIDHPVVQALVGKIEDRRIITYGENPQADARLLELKPSGSGSTFKVAFRDRKAGTAHEIAELMLPMPGRHNALNATAAIAVAHELGLSDDTIRKALAAFGGVRRRFTKTGDWNGVTIIDDYGHHPVEIAAVLKAARQSTDGRVIAVVQPHRFTRLQSLFEEFCTCFNDADSVIVADVYPAGEAPIQGIDRDHFVLGLRAHGHRNVIPLQDSASLAGVVAGVAKSGDYVVCLGAGNITQWAYALPGELKALGG.

114–120 (GTHGKTT) contributes to the ATP binding site.

The protein belongs to the MurCDEF family.

The protein resides in the cytoplasm. The enzyme catalyses UDP-N-acetyl-alpha-D-muramate + L-alanine + ATP = UDP-N-acetyl-alpha-D-muramoyl-L-alanine + ADP + phosphate + H(+). Its pathway is cell wall biogenesis; peptidoglycan biosynthesis. Its function is as follows. Cell wall formation. The sequence is that of UDP-N-acetylmuramate--L-alanine ligase from Rhodopseudomonas palustris (strain HaA2).